Here is a 395-residue protein sequence, read N- to C-terminus: Small ribosomal subunit protein mS31 (395 aa).

The transit peptide at 1–65 (MFPRVSTFLP…IQRYFGTNSV (65 aa)) directs the protein to the mitochondrion. Disordered regions lie at residues 70 to 97 (KDKQ…NTKK) and 175 to 196 (SELL…DAKR). The segment covering 183–196 (QHEEESRAQRDAKR) has biased composition (basic and acidic residues).

The protein belongs to the mitochondrion-specific ribosomal protein mS31 family. As to quaternary structure, component of the mitochondrial small ribosomal subunit (mt-SSU). Mature mammalian 55S mitochondrial ribosomes consist of a small (28S) and a large (39S) subunit. The 28S small subunit contains a 12S ribosomal RNA (12S mt-rRNA) and 30 different proteins. The 39S large subunit contains a 16S rRNA (16S mt-rRNA), a copy of mitochondrial valine transfer RNA (mt-tRNA(Val)), which plays an integral structural role, and 52 different proteins.

Its subcellular location is the mitochondrion. In Homo sapiens (Human), this protein is Small ribosomal subunit protein mS31 (MRPS31).